A 130-amino-acid polypeptide reads, in one-letter code: Putative protein ZNF815 (130 aa).

This chain is Putative protein ZNF815 (ZNF815P), found in Homo sapiens (Human).